Here is a 114-residue protein sequence, read N- to C-terminus: Putative toxin HigB3 (114 aa).

Belongs to the mycobacterial HigB family.

Functionally, putative toxic component of a type II toxin-antitoxin (TA) system. Its cognate antitoxin would be HigA3. Not toxic upon expression in M.smegmatis. The polypeptide is Putative toxin HigB3 (Mycobacterium tuberculosis (strain ATCC 25618 / H37Rv)).